The primary structure comprises 357 residues: uncharacterized protein (357 aa).

An N-terminal signal peptide occupies residues 1–19; the sequence is MKRILSFIFIILFFNSSYA.

This is an uncharacterized protein from Rickettsia prowazekii (strain Madrid E).